The chain runs to 407 residues: Acetate kinase (407 aa).

Asparagine 10 provides a ligand contact to Mg(2+). Lysine 17 contacts ATP. Position 93 (arginine 93) interacts with substrate. Aspartate 150 acts as the Proton donor/acceptor in catalysis. ATP-binding positions include 210–214, 284–286, and 332–336; these read HLGNG, DMR, and GVGEN. Glutamate 386 lines the Mg(2+) pocket.

The protein belongs to the acetokinase family. In terms of assembly, homodimer. The cofactor is Mg(2+). Mn(2+) is required as a cofactor.

It is found in the cytoplasm. It catalyses the reaction acetate + ATP = acetyl phosphate + ADP. It functions in the pathway metabolic intermediate biosynthesis; acetyl-CoA biosynthesis; acetyl-CoA from acetate: step 1/2. In terms of biological role, catalyzes the formation of acetyl phosphate from acetate and ATP. Can also catalyze the reverse reaction. The polypeptide is Acetate kinase (Streptomyces coelicolor (strain ATCC BAA-471 / A3(2) / M145)).